A 97-amino-acid chain; its full sequence is Large ribosomal subunit protein uL23 (97 aa).

It belongs to the universal ribosomal protein uL23 family. As to quaternary structure, part of the 50S ribosomal subunit. Contacts protein L29, and trigger factor when it is bound to the ribosome.

Functionally, one of the early assembly proteins it binds 23S rRNA. One of the proteins that surrounds the polypeptide exit tunnel on the outside of the ribosome. Forms the main docking site for trigger factor binding to the ribosome. The protein is Large ribosomal subunit protein uL23 of Sinorhizobium medicae (strain WSM419) (Ensifer medicae).